Reading from the N-terminus, the 628-residue chain is Somatic embryogenesis receptor kinase 2 (628 aa).

Residues 1 to 29 (MGRKKFEAFGFVCLISLLLLFNSLWLASS) form the signal peptide. Residues 30–241 (NMEGDALHSL…PTPGGYSATG (212 aa)) are Extracellular-facing. A PSKR1 binding region spans residues 45–85 (DPNNVLQSWDPTLVNPCTWFHVTCNNENSVIRVDLGNADLS). The tract at residues 56–58 (TLV) is CLE44 binding. Cys-61 and Cys-68 are disulfide-bonded. Leucine-rich repeat receptor-like protein kinase binding regions lie at residues 62–81 (TWFH…DLGN) and 100–105 (YLELYS). Residue 64-65 (FH) participates in brassinolide binding. LRR repeat units lie at residues 95–119 (LKNL…LGNL), 121–143 (NLVS…LGKL), 144–167 (FKLR…LTNI), and 168–192 (MTLQ…SFSL). 2 N-linked (GlcNAc...) asparagine glycosylation sites follow: Asn-107 and Asn-118. Leucine-rich repeat receptor-like protein kinase binding stretches follow at residues 126–129 (DLYL) and 148–150 (FLR). 2 N-linked (GlcNAc...) asparagine glycosylation sites follow: Asn-153 and Asn-187. The leucine-rich repeat receptor-like protein kinase binding stretch occupies residues 174-197 (DLSNNRLSGSVPDNGSFSLFTPIS). A disulfide bridge connects residues Cys-205 and Cys-213. The chain crosses the membrane as a helical span at residues 242-262 (AIAGGVAAGAALLFAAPALAF). Over 263 to 628 (AWWRRRKPQE…LHAMELSGPR (366 aa)) the chain is Cytoplasmic. Thr-302 carries the phosphothreonine modification. The Protein kinase domain occupies 305 to 592 (FSNKNILGRG…GLAEKWDEWQ (288 aa)). Residue 311–319 (LGRGGFGKV) coordinates ATP. Thr-328 carries the post-translational modification Phosphothreonine. Lys-333 lines the ATP pocket. Ser-386 and Ser-389 each carry phosphoserine. Catalysis depends on Asp-432, which acts as the Proton acceptor. 4 positions are modified to phosphothreonine: Thr-462, Thr-465, Thr-466, and Thr-471. Phosphotyrosine is present on Tyr-479. Ser-481 is subject to Phosphoserine. Thr-482 is modified (phosphothreonine). Phosphoserine is present on Ser-486. At Thr-562 the chain carries Phosphothreonine. Ser-604 is modified (phosphoserine). Thr-616 carries the post-translational modification Phosphothreonine. Ser-625 carries the post-translational modification Phosphoserine.

It belongs to the protein kinase superfamily. Ser/Thr protein kinase family. As to quaternary structure, homo- and heterodimer. Component of the SERK1 signaling complex, composed of KAPP, CDC48A, GRF6 or GRF7, SERK1, SERK2, SERK3/BAK1 and BRI1. Bind to BRI1 in a brassinolide-dependent manner. Heterodimer with PSKR1. Interacts with the EF-Tu receptor EFR and FLS2 in a specific ligand-induced manner. Interacts with ERECTA in a EPF2-induced manner. Interacts with ERL1 in a EPF1-induced manner. Interacts with TMM. In the presence of the signal peptide RGF1, interacts with RGI3/RGFR1 and RGI4/RGFR2/SKM2. Binds to the peptide CLE44 in the presence of TDR. Post-translationally, autophosphorylated. As to expression, expressed in flowers, tapetum, developing microspores, all cells of the embryo sac, provascular strands and developing vascular bundles. Low expression in adult vascular tissue.

It localises to the cell membrane. The enzyme catalyses L-seryl-[protein] + ATP = O-phospho-L-seryl-[protein] + ADP + H(+). The catalysed reaction is L-threonyl-[protein] + ATP = O-phospho-L-threonyl-[protein] + ADP + H(+). Functionally, serine/threonine-kinase involved in brassinosteroid-dependent and -independent signaling pathways. Acts redundantly with SERK1 as a control point for sporophytic development controlling male gametophyte production. Serves as coreceptor to small peptide (e.g. RGF1 and CLE44) signaling. Involved in the perception of phytosulfokine and subsequent signal transduction. This Arabidopsis thaliana (Mouse-ear cress) protein is Somatic embryogenesis receptor kinase 2.